The chain runs to 146 residues: Large ribosomal subunit protein uL16 (146 aa).

This sequence belongs to the universal ribosomal protein uL16 family. As to quaternary structure, part of the 50S ribosomal subunit.

Functionally, binds 23S rRNA and is also seen to make contacts with the A and possibly P site tRNAs. This chain is Large ribosomal subunit protein uL16, found in Lactobacillus helveticus (strain DPC 4571).